Reading from the N-terminus, the 381-residue chain is DnaJ-related protein spj1 (381 aa).

Residues 5–74 enclose the J domain; it reads NFSQKQILGV…RKIYDAYGEE (70 aa). The segment at 72–93 is disordered; that stretch reads GEEGLNGQPGGPGGGPGEGFPG. Positions 78–93 are enriched in gly residues; the sequence is GQPGGPGGGPGEGFPG. Residues 138–225 form a CR-type zinc finger; that stretch reads GGSFTLEIPV…CKGERVAEVV (88 aa). CXXCXGXG motif repeat units lie at residues 151-158, 172-179, 199-206, and 213-220; these read CSVCSGQG, CPVCGGSG, CNACNGNG, and CPRCKGER. The Prevents secretion from ER motif lies at 378–381; sequence FDEL.

Its subcellular location is the endoplasmic reticulum. The protein is DnaJ-related protein spj1 (spj1) of Schizosaccharomyces pombe (strain 972 / ATCC 24843) (Fission yeast).